The chain runs to 157 residues: Selenoprotein F (157 aa).

The first 19 residues, 1 to 19 (MSGEVYILWLLSLIQTLSA), serve as a signal peptide directing secretion. Selenocysteine 84 is a non-standard amino acid (selenocysteine).

The protein belongs to the selenoprotein M/F family. As to expression, expressed in the brain, liver and retina. Localized to the retinal ganglion cell layer, the inner nuclear layer and the outer nuclear layer at both parr and smolt stages.

Its subcellular location is the endoplasmic reticulum lumen. Its function is as follows. May be involved in redox reactions associated with the formation of disulfide bonds. May contribute to the quality control of protein folding in the endoplasmic reticulum. May be involved in retinal development. This Oncorhynchus mykiss (Rainbow trout) protein is Selenoprotein F.